A 669-amino-acid chain; its full sequence is Serine/threonine-protein kinase hippo (669 aa).

2 positions are modified to phosphoserine: serine 30 and serine 33. The region spanning 42 to 293 is the Protein kinase domain; sequence FDIMYKLGEG…ATELLEHEFI (252 aa). ATP-binding positions include 48–56 and lysine 71; that span reads LGEGSYGSV. The active-site Proton acceptor is the aspartate 161. Threonine 195 is modified (phosphothreonine; by Tao). Residues 432-445 show a composition bias toward polar residues; the sequence is MVINSDSDDSTTAK. The disordered stretch occupies residues 432–508; sequence MVINSDSDDS…QQQQQDEQHL (77 aa). The segment covering 460 to 479 has biased composition (basic and acidic residues); sequence FLEHFDRKNAGDGRGDEKPI. The span at 490–503 shows a compositional bias: low complexity; sequence QQQQQQQQQQQQQQ. An SARAH domain is found at 608 to 655; it reads FEFLKFLTFDDLNQRLCNIDHEMELEIEQLNKKYNAKRQPIVDAMNAK.

It belongs to the protein kinase superfamily. STE Ser/Thr protein kinase family. STE20 subfamily. In terms of assembly, homodimer. Interacts with Sav and Wts. Interacts (via SARAH domain) with Ex. Interacts with Kibra. Autophosphorylated. In terms of tissue distribution, expressed in CNS during embryogenesis. In third instar larvae, it is expressed throughout all imaginal disks.

It localises to the apical cell membrane. The protein resides in the cytoplasm. The enzyme catalyses L-seryl-[protein] + ATP = O-phospho-L-seryl-[protein] + ADP + H(+). It carries out the reaction L-threonyl-[protein] + ATP = O-phospho-L-threonyl-[protein] + ADP + H(+). In terms of biological role, plays a key role in the Hippo/SWH (Sav/Wts/Hpo) signaling pathway, a signaling pathway that plays a pivotal role in organ size control and tumor suppression by restricting proliferation and promoting apoptosis. The core of this pathway is composed of a kinase cascade wherein Hippo (Hpo), in complex with its regulatory protein Salvador (Sav), phosphorylates and activates Warts (Wts) in complex with its regulatory protein Mats, which in turn phosphorylates and inactivates the Yorkie (Yki) oncoprotein. The Hippo/SWH signaling pathway inhibits the activity of the transcriptional complex formed by Scalloped (sd) and Yki and the target genes of this pathway include cyclin-E (cycE), diap1 and bantam. Phosphorylates Sav, Wts and Th/DIAP1. Regulates the level of Th/DIAP1 apoptosis inhibitor. The protein is Serine/threonine-protein kinase hippo (hpo) of Drosophila melanogaster (Fruit fly).